The following is a 226-amino-acid chain: Uridylate kinase (226 aa).

An ATP-binding site is contributed by 6–10 (KISGK). Residue Gly-43 coordinates UMP. Residues Gly-44 and Arg-48 each coordinate ATP. UMP-binding positions include Asp-65 and 113-119 (FQPGQST). ATP contacts are provided by Thr-139, Asn-140, Tyr-145, and Asp-148.

The protein belongs to the UMP kinase family. As to quaternary structure, homohexamer.

The protein localises to the cytoplasm. The enzyme catalyses UMP + ATP = UDP + ADP. The protein operates within pyrimidine metabolism; CTP biosynthesis via de novo pathway; UDP from UMP (UMPK route): step 1/1. With respect to regulation, inhibited by UTP. Catalyzes the reversible phosphorylation of UMP to UDP. In Sulfurisphaera tokodaii (strain DSM 16993 / JCM 10545 / NBRC 100140 / 7) (Sulfolobus tokodaii), this protein is Uridylate kinase.